A 638-amino-acid polypeptide reads, in one-letter code: ATP-dependent rRNA helicase spb4 (638 aa).

A Q motif motif is present at residues 14–42 (WDGVSPSLSEWVLEAVSSMGFTRMTPVQA). The Helicase ATP-binding domain maps to 45–249 (IPLFMAHKDV…RVGLRNPVKV (205 aa)). Residue 58 to 65 (AVTGSGKT) participates in ATP binding. The DEAD box motif lies at 197–200 (DEAD). Residues 283-437 (ALKHILHSVD…PISFSESEAT (155 aa)) form the Helicase C-terminal domain. Composition is skewed to basic and acidic residues over residues 534–554 (LLQESKEGDGTQESSNKRKAT) and 577–615 (QRRQEKNKWEKMTEEERQKIRETEQMVESIRVKNEEERR). A disordered region spans residues 534–638 (LLQESKEGDG…KDEEEFEGFD (105 aa)). Positions 566–619 (RNKKQKRREQKQRRQEKNKWEKMTEEERQKIRETEQMVESIRVKNEEERRLRRA) form a coiled coil.

It belongs to the DEAD box helicase family. DDX55/SPB4 subfamily. Component of pre-60S ribosomal complexes.

The protein localises to the nucleus. Its subcellular location is the nucleolus. It catalyses the reaction ATP + H2O = ADP + phosphate + H(+). ATP-binding RNA helicase involved in the biogenesis of 60S ribosomal subunits. Binds 90S pre-ribosomal particles and dissociates from pre-60S ribosomal particles after processing of 27SB pre-rRNA. Required for the normal formation of 18S rRNA through the processing of pre-rRNAs at sites A0, A1 and A2, and the normal formation of 25S and 5.8S rRNAs through the processing of pre-rRNAs at sites C1 and C2. In Aspergillus oryzae (strain ATCC 42149 / RIB 40) (Yellow koji mold), this protein is ATP-dependent rRNA helicase spb4.